Consider the following 584-residue polypeptide: Breast carcinoma-amplified sequence 1 (584 aa).

Disordered regions lie at residues 1-29 (MGNQ…NASA), 59-280 (VATS…AAAI), and 297-377 (PNKA…GKLF). 2 stretches are compositionally biased toward polar residues: residues 59 to 69 (VATSSPETTEI) and 112 to 128 (ADSS…SNKA). 2 positions are modified to phosphoserine: Ser-124 and Ser-192. Composition is skewed to basic and acidic residues over residues 186–226 (SKPK…KVDE), 238–252 (PAGK…KEGQ), and 300–311 (AETKKDPEDTGA). Ser-314 is modified (phosphoserine). Polar residues predominate over residues 314-354 (SPTTSADLKSDKANFTSQETQGAGKNSKGCNPSGHTQSVTT). The span at 357-366 (PAKEGTKEKS) shows a compositional bias: basic and acidic residues. 2 positions are modified to phosphoserine: Ser-381 and Ser-399. The segment at 415–584 (TVDLNEGDAA…VSIGPVGKSK (170 aa)) is disordered. Over residues 428 to 439 (TEAKLKREESKP) the composition is skewed to basic and acidic residues. Thr-480 carries the phosphothreonine modification. The segment covering 494–506 (KGKEGSSKDKKSA) has biased composition (basic and acidic residues). The segment covering 525–540 (CTEQATVDTNSLQNGD) has biased composition (polar residues). Over residues 541–550 (KLQKRPEKRQ) the composition is skewed to basic and acidic residues. A Phosphoserine modification is found at Ser-552. The interval 565-584 (MLDAQVQTDPVSIGPVGKSK) is interacts with DYNLL1 and DYNLL2.

In terms of assembly, homodimer. Interacts with DYNLL1 and DYNLL2. As to expression, highly expressed in the brain and, more specifically, in oligodendrocytes (at protein level). Expressed in the prostate, and at lower levels in testis, intestine and colon. Overexpressed in most breast cancer cell lines and down-regulated in some colorectal tumors.

It localises to the cytoplasm. Its function is as follows. Required for myelination. The polypeptide is Breast carcinoma-amplified sequence 1 (BCAS1) (Homo sapiens (Human)).